We begin with the raw amino-acid sequence, 582 residues long: Transcription factor tau subunit sfc6 (582 aa).

The segment at 1–97 is disordered; the sequence is MGPKSKEYEN…SAKKQSSKGL (97 aa). Residues 18–39 show a composition bias toward acidic residues; that stretch reads EDNDDDGDFVLENVMSEEDIEI. Positions 63-87 are enriched in polar residues; it reads QPLTPSSSKGAGNEPKSQNSSTTRG. WD repeat units lie at residues 221–262, 268–314, and 326–369; these read TQFL…NFKS, HDWG…VKFH, and FNDS…ECPL.

In terms of assembly, component of the TFIIIC complex including sfc1, sfc3, sfc4, sfc6 and sfc7. The subunits are organized in two globular domains, tauA and tauB, connected by a proteolysis-sensitive and flexible linker. Interacts with sfc1, sfc3 and sfc4.

It localises to the nucleus. In terms of biological role, TFIIIC mediates tRNA and 5S RNA gene activation by binding to intragenic promoter elements. Upstream of the transcription start site, TFIIIC assembles the initiation complex TFIIIB-TFIIIC-tDNA, which is sufficient for RNA polymerase III recruitment and function. Part of the tauB domain of TFIIIC that binds boxB DNA promoter sites of tRNA and similar genes. Cooperates with sfc3 in DNA binding. Localizes to chromatin insulator sequence without recruiting RNA polymerase III and plays a role in nuclear organization. This Schizosaccharomyces pombe (strain 972 / ATCC 24843) (Fission yeast) protein is Transcription factor tau subunit sfc6.